Reading from the N-terminus, the 207-residue chain is Microtubule-associated protein Jupiter (207 aa).

Phosphoserine is present on Ser-30. Phosphothreonine occurs at positions 41 and 102. Phosphoserine is present on residues Ser-111, Ser-138, and Ser-149. 2 disordered regions span residues 129 to 174 (KGKY…YKAG) and 188 to 207 (GNQVINKNRVPPGGYSSGLW). A compositionally biased stretch (low complexity) spans 136–149 (SGSVSSASSSVSSS). Positions 150-164 (TENLKINVGNRSDGN) are enriched in polar residues.

Belongs to the MAP Jupiter family.

It is found in the nucleus. The protein localises to the cytoplasm. Its subcellular location is the cytoskeleton. The protein resides in the spindle. Binds to all microtubule populations. This is Microtubule-associated protein Jupiter from Drosophila grimshawi (Hawaiian fruit fly).